Consider the following 139-residue polypeptide: Natriuretic peptide Mf-NP (139 aa).

The signal sequence occupies residues M1–G25. The propeptide occupies K26–E75. Cysteines 86 and 102 form a disulfide. Positions I117–G139 are excised as a propeptide.

It belongs to the natriuretic peptide family. In terms of tissue distribution, expressed by the venom gland.

The protein localises to the secreted. Its function is as follows. Natriuretic peptide that dose-dependently induces the rapid relaxation of rat aortic strips phenylephrine-precontracted. Acts by stimulating cGMP production in a dose-dependent manner (by probably activating NPR1 and/or NPR2). May also show potent hypotensive effects. The protein is Natriuretic peptide Mf-NP of Micrurus fulvius (Eastern coral snake).